Reading from the N-terminus, the 466-residue chain is Argininosuccinate lyase 1 (466 aa).

The protein belongs to the lyase 1 family. Argininosuccinate lyase subfamily.

It localises to the cytoplasm. The catalysed reaction is 2-(N(omega)-L-arginino)succinate = fumarate + L-arginine. It participates in amino-acid biosynthesis; L-arginine biosynthesis; L-arginine from L-ornithine and carbamoyl phosphate: step 3/3. The protein is Argininosuccinate lyase 1 of Mesorhizobium japonicum (strain LMG 29417 / CECT 9101 / MAFF 303099) (Mesorhizobium loti (strain MAFF 303099)).